The following is an 87-amino-acid chain: MRLHLLLLILLLFSILLSPVRGGLGPAEGHCLNLSGVCRRDVCKVVEDQIGACRRRMKCCRAWWILMPIPTPLIMSDYQEPLKRKLK.

The first 22 residues, 1-22, serve as a signal peptide directing secretion; sequence MRLHLLLLILLLFSILLSPVRG. Intrachain disulfides connect C31–C59, C38–C53, and C43–C60.

It belongs to the beta-defensin family.

The protein localises to the secreted. Functionally, has antibacterial activity. The chain is Beta-defensin 109 (DEFB109) from Pan troglodytes (Chimpanzee).